A 409-amino-acid chain; its full sequence is Sprouty-related, EVH1 domain-containing protein 2 (409 aa).

In terms of domain architecture, WH1 spans 5–121 (APPEDDSYIV…RGVRKAIEDL (117 aa)). The segment at 121–170 (LTEGSTTSSSTIHNEAELGDDDVFATSTDSSSNSSQKREPPVRTIASPLP) is disordered. Over residues 123-133 (EGSTTSSSTIH) the composition is skewed to polar residues. The segment covering 146–155 (TSTDSSSNSS) has biased composition (low complexity). Positions 199–253 (PHRHVSFPDDDDEIVRINPRERNWLTGYEDYRQAPIHRKYPDTESIDSYVRFAKS) constitute a KBD domain. One can recognise an SPR domain in the interval 299–407 (RCIYCRDMFN…CGCCGGKHKA (109 aa)).

It is found in the cell membrane. It localises to the cytoplasmic vesicle. The protein localises to the secretory vesicle membrane. The protein resides in the cytoplasm. Functionally, negatively regulates Ras signaling pathways and downstream activation of MAP kinases. The chain is Sprouty-related, EVH1 domain-containing protein 2 (spred2) from Xenopus tropicalis (Western clawed frog).